The chain runs to 57 residues: Small ribosomal subunit protein bS21 (57 aa).

The segment covering 32–42 (VRRREHYEKPS) has biased composition (basic and acidic residues). A disordered region spans residues 32 to 57 (VRRREHYEKPSQRRKRKLEASRRRRR). Over residues 43–57 (QRRKRKLEASRRRRR) the composition is skewed to basic residues.

It belongs to the bacterial ribosomal protein bS21 family.

This Synechococcus elongatus (strain ATCC 33912 / PCC 7942 / FACHB-805) (Anacystis nidulans R2) protein is Small ribosomal subunit protein bS21.